The primary structure comprises 156 residues: Ribonuclease pancreatic (156 aa).

An N-terminal signal peptide occupies residues 1–28 (MALEKSLVLLPLLVLILLVLGWVQPSLG). The segment covering 33-43 (AKKFQRQHMDS) has biased composition (basic and acidic residues). The interval 33–52 (AKKFQRQHMDSDSSPSSNST) is disordered. Substrate-binding residues include lysine 35 and arginine 38. The active-site Proton acceptor is the histidine 40. Asparagine 50 and asparagine 62 each carry an N-linked (GlcNAc...) asparagine glycan. 4 disulfides stabilise this stretch: cysteine 54/cysteine 112, cysteine 68/cysteine 123, cysteine 86/cysteine 138, and cysteine 93/cysteine 100. Residues 69 to 73 (KPVNT) and lysine 94 each bind substrate. N-linked (GlcNAc...) asparagine glycosylation is present at asparagine 104. Arginine 113 lines the substrate pocket. A glycan (N-linked (GlcNAc...) asparagine) is linked at asparagine 116. Histidine 147 acts as the Proton donor in catalysis.

This sequence belongs to the pancreatic ribonuclease family. As to quaternary structure, monomer. Interacts with and forms tight 1:1 complexes with RNH1. Dimerization of two such complexes may occur. Interaction with RNH1 inhibits this protein.

It localises to the secreted. The enzyme catalyses an [RNA] containing cytidine + H2O = an [RNA]-3'-cytidine-3'-phosphate + a 5'-hydroxy-ribonucleotide-3'-[RNA].. The catalysed reaction is an [RNA] containing uridine + H2O = an [RNA]-3'-uridine-3'-phosphate + a 5'-hydroxy-ribonucleotide-3'-[RNA].. Endonuclease that catalyzes the cleavage of RNA on the 3' side of pyrimidine nucleotides. Acts on single-stranded and double-stranded RNA. This chain is Ribonuclease pancreatic (RNASE1), found in Gorilla gorilla gorilla (Western lowland gorilla).